A 1025-amino-acid chain; its full sequence is Multidrug resistance protein MdtC (1025 aa).

A run of 12 helical transmembrane segments spans residues 3 to 23 (FFAL…AITL), 333 to 353 (EVEQ…FLFL), 360 to 380 (IIPA…MYLC), 387 to 407 (LSLM…IVVL), 431 to 451 (VGFT…PLLL), 463 to 483 (FAVT…TLTP), 528 to 548 (LVGV…ISIP), 853 to 873 (VILI…LYES), 875 to 895 (VHPL…LLAL), 897 to 917 (LFNA…IGIV), 953 to 973 (PIMM…LSGG), and 984 to 1004 (ITIV…TPVV).

It belongs to the resistance-nodulation-cell division (RND) (TC 2.A.6) family. MdtC subfamily. In terms of assembly, part of a tripartite efflux system composed of MdtA, MdtB and MdtC. MdtC forms a heteromultimer with MdtB.

It localises to the cell inner membrane. This is Multidrug resistance protein MdtC from Shigella sonnei (strain Ss046).